The following is a 262-amino-acid chain: tRNA pseudouridine synthase A (262 aa).

Asp51 (nucleophile) is an active-site residue. A substrate-binding site is contributed by Tyr109.

The protein belongs to the tRNA pseudouridine synthase TruA family. In terms of assembly, homodimer.

It carries out the reaction uridine(38/39/40) in tRNA = pseudouridine(38/39/40) in tRNA. Functionally, formation of pseudouridine at positions 38, 39 and 40 in the anticodon stem and loop of transfer RNAs. This is tRNA pseudouridine synthase A from Aliivibrio fischeri (strain ATCC 700601 / ES114) (Vibrio fischeri).